A 180-amino-acid chain; its full sequence is MTTALLVIDIQNDYFPNGKMALTNPEKAAQNAAKLLSHFRNTGAPVFHVQHITEGNIAHFFHPNTEGVEIHESVRPLEKETVIVKHMPNSFFNTDLNGKLQEEGVKELVVCGMMSHMCIDATVRSAVEHGYVCQVVEDACATTTLQIEDKIVPAEHVHYAFMAALNGVYATVKTTEAFLK.

This sequence belongs to the isochorismatase family.

This is an uncharacterized protein from Bacillus subtilis (strain 168).